The primary structure comprises 345 residues: Protein CHROMOSOME TRANSMISSION FIDELITY 7 (345 aa).

The CCHH-type zinc finger occupies 96 to 120; that stretch reads RHCAECGAKYAPGDELDEKNHQSFH.

This sequence belongs to the acetyltransferase family. ECO subfamily. In terms of processing, autoacetylated. Expressed in roots, stems, leaves, young seedlings and flower buds. Detected in the embryo, but not in the endosperm.

The protein resides in the nucleus. It localises to the cytoplasm. Acetyltransferase required for the establishment of sister chromatid cohesion. Involved in preservation of genome integrity and meiosis. Required for DNA repair and for the regulation of chromosome segregation during mitotic cell division. Knock-down mutants are extremely dwarf. Regulator of sister chromatid cohesion in meiosis which negatively regulates cohesin association with chromatin, acting as an antagonist of WAPL1 and WAPL2. The sequence is that of Protein CHROMOSOME TRANSMISSION FIDELITY 7 from Arabidopsis thaliana (Mouse-ear cress).